An 891-amino-acid chain; its full sequence is Bifunctional aldehyde-alcohol dehydrogenase AdhE (891 aa).

Residues 2-440 (AVTNVAELNA…ENVGPKHLIN (439 aa)) form an aldehyde dehydrogenase region. NAD(+) contacts are provided by residues 110–115 (IVPTTN), glycine 195, and glycine 213. The active-site Nucleophile is the cysteine 246. NAD(+)-binding residues include glutamate 335 and leucine 419. A linker region spans residues 441-448 (KKTVAKRA). Positions 449–891 (ENMLWHKLPK…KAEKKAKKSA (443 aa)) are alcohol dehydrogenase. Residues aspartate 487, aspartate 519, 546 to 550 (GSPMD), 597 to 598 (TT), valine 610, lysine 619, and leucine 638 each bind NAD(+). Fe cation contacts are provided by aspartate 653, histidine 657, histidine 723, and histidine 737.

This sequence in the N-terminal section; belongs to the aldehyde dehydrogenase family. In the C-terminal section; belongs to the iron-containing alcohol dehydrogenase family. As to quaternary structure, forms long filaments, called spirosomes. Fe(2+) is required as a cofactor.

It carries out the reaction acetaldehyde + NAD(+) + CoA = acetyl-CoA + NADH + H(+). The enzyme catalyses ethanol + NAD(+) = acetaldehyde + NADH + H(+). The catalysed reaction is a primary alcohol + NAD(+) = an aldehyde + NADH + H(+). Under fermentative conditions, catalyzes the sequential NADH-dependent reduction of acetyl-CoA to acetaldehyde and then to ethanol. Plays an important role in virulence and is critical for proper regulation of virulence gene expression. The polypeptide is Bifunctional aldehyde-alcohol dehydrogenase AdhE (Escherichia coli O157:H7).